A 434-amino-acid polypeptide reads, in one-letter code: Histidinol dehydrogenase (434 aa).

NAD(+)-binding residues include Tyr130, Gln188, and Asn211. Residues Ser237, Gln259, and His262 each coordinate substrate. Residues Gln259 and His262 each coordinate Zn(2+). Residues Glu326 and His327 each act as proton acceptor in the active site. His327, Asp360, Glu414, and His419 together coordinate substrate. Position 360 (Asp360) interacts with Zn(2+). His419 serves as a coordination point for Zn(2+).

This sequence belongs to the histidinol dehydrogenase family. Homodimer. Zn(2+) serves as cofactor.

It catalyses the reaction L-histidinol + 2 NAD(+) + H2O = L-histidine + 2 NADH + 3 H(+). Its pathway is amino-acid biosynthesis; L-histidine biosynthesis; L-histidine from 5-phospho-alpha-D-ribose 1-diphosphate: step 9/9. In terms of biological role, catalyzes the sequential NAD-dependent oxidations of L-histidinol to L-histidinaldehyde and then to L-histidine. This Escherichia coli (strain K12) protein is Histidinol dehydrogenase.